Reading from the N-terminus, the 38-residue chain is Beta-galactosidase (38 aa).

Belongs to the glycosyl hydrolase 35 family. Heterodimer of a large and a small subunit. Post-translationally, the small subunit is N-glycosylated.

The enzyme catalyses Hydrolysis of terminal non-reducing beta-D-galactose residues in beta-D-galactosides.. Involved in cell wall degradation. Degrades polysaccharides containing beta-(1--&gt;4)-linked galactans, acting as an exo-(1--&gt;4)-beta-D-galactanase. In Hordeum vulgare (Barley), this protein is Beta-galactosidase.